Here is a 742-residue protein sequence, read N- to C-terminus: Ectonucleotide pyrophosphatase/phosphodiesterase 1 (742 aa).

Residues 1–113 (MELQNDLESL…TGFHSKVPFK (113 aa)) are Cytoplasmic-facing. A helical transmembrane segment spans residues 114 to 134 (IIFRTLFGSLVFAIFLILMIN). Residues 135–742 (IAKPHHSTRV…SIDDLVDSDT (608 aa)) are Extracellular-facing. Asparagine 161 and asparagine 204 each carry an N-linked (GlcNAc...) asparagine glycan. Residues 168 to 545 (PLTIVISLDG…VFTIGSHGYD (378 aa)) form a phosphodiesterase region. The active-site Nucleophile is the threonine 219. N-linked (GlcNAc...) asparagine glycosylation is found at asparagine 264, asparagine 296, and asparagine 403. A compositionally biased stretch (acidic residues) spans 640-659 (EETEQDNVDNDNDDNDDGNT). Disordered stretches follow at residues 640 to 670 (EETE…SSSL) and 686 to 711 (TLLG…TAST). Residues 691 to 711 (TSPSSRSSSSSSIQASATAST) show a composition bias toward low complexity.

This sequence belongs to the nucleotide pyrophosphatase/phosphodiesterase family. Autophosphorylated as part of the catalytic cycle of phosphodiesterase/pyrophosphatase activity. Post-translationally, N-glycosylated.

It is found in the membrane. It catalyses the reaction Hydrolytically removes 5'-nucleotides successively from the 3'-hydroxy termini of 3'-hydroxy-terminated oligonucleotides.. The enzyme catalyses a ribonucleoside 5'-triphosphate + H2O = a ribonucleoside 5'-phosphate + diphosphate + H(+). The catalysed reaction is a 2'-deoxyribonucleoside 5'-triphosphate + H2O = a 2'-deoxyribonucleoside 5'-phosphate + diphosphate + H(+). Mediates extracellular nucleotide derived phosphate hydrolysis along with NPP2 and PHO5. The sequence is that of Ectonucleotide pyrophosphatase/phosphodiesterase 1 (NPP1) from Saccharomyces cerevisiae (strain ATCC 204508 / S288c) (Baker's yeast).